A 550-amino-acid polypeptide reads, in one-letter code: Chaperonin GroEL (550 aa).

Residues 29 to 32 (TAGP), lysine 50, 86 to 90 (DGTTT), glycine 417, and aspartate 499 each bind ATP.

This sequence belongs to the chaperonin (HSP60) family. In terms of assembly, forms a cylinder of 14 subunits composed of two heptameric rings stacked back-to-back. Interacts with the co-chaperonin GroES.

Its subcellular location is the cytoplasm. It carries out the reaction ATP + H2O + a folded polypeptide = ADP + phosphate + an unfolded polypeptide.. In terms of biological role, together with its co-chaperonin GroES, plays an essential role in assisting protein folding. The GroEL-GroES system forms a nano-cage that allows encapsulation of the non-native substrate proteins and provides a physical environment optimized to promote and accelerate protein folding. The polypeptide is Chaperonin GroEL (Ehrlichia chaffeensis).